A 372-amino-acid chain; its full sequence is MNALHALQTLAVSIRSVRKVYGDPHSGPVALKNIDLDIRDNEFFTLLGPSGCGKTTLLRMIAGFEFPTQGEILLYGENIADRPPFERPVNTVFQHYALFPHMTLAENLAFGLESRPMGQVLSKAQIDERVREMLALVQMERFAARKPNQLSGGQQQRIALARALAPHPKVLLLDEPLSALDLKLRQAMREELKAIQAKTGITFIFVTHDQEEALTLSDRIAVLSEGEVQQVGRPEEIYEQPRNRFVADFIGETNFIPAMVSRVEAGLAWFSGPAGQALPAQPCTTAKVGQQVTLSVRPERLHLRGDASQGALACRIEALIYLGTDLQYQVSLGDGTRLTVRTPNSLEHHPRLSVGSSAGLLFERGSASVLLD.

The ABC transporter domain maps to Val12 to Ile250. Gly48–Thr55 contributes to the ATP binding site.

It belongs to the ABC transporter superfamily. Spermidine/putrescine importer (TC 3.A.1.11.1) family. As to quaternary structure, the complex is composed of two ATP-binding proteins (PotA), two transmembrane proteins (PotB and PotC) and a solute-binding protein (PotD).

It localises to the cell inner membrane. It carries out the reaction ATP + H2O + polyamine-[polyamine-binding protein]Side 1 = ADP + phosphate + polyamineSide 2 + [polyamine-binding protein]Side 1.. In terms of biological role, part of the ABC transporter complex PotABCD involved in spermidine/putrescine import. Responsible for energy coupling to the transport system. The protein is Spermidine/putrescine import ATP-binding protein PotA of Pseudomonas fluorescens (strain ATCC BAA-477 / NRRL B-23932 / Pf-5).